A 247-amino-acid polypeptide reads, in one-letter code: 5'-nucleotidase SurE (247 aa).

A divalent metal cation-binding residues include aspartate 8, aspartate 9, serine 39, and asparagine 91.

It belongs to the SurE nucleotidase family. It depends on a divalent metal cation as a cofactor.

The protein resides in the cytoplasm. It catalyses the reaction a ribonucleoside 5'-phosphate + H2O = a ribonucleoside + phosphate. Its function is as follows. Nucleotidase that shows phosphatase activity on nucleoside 5'-monophosphates. In Pelobacter propionicus (strain DSM 2379 / NBRC 103807 / OttBd1), this protein is 5'-nucleotidase SurE.